Reading from the N-terminus, the 121-residue chain is Large ribosomal subunit protein uL14 (121 aa).

This sequence belongs to the universal ribosomal protein uL14 family. Part of the 50S ribosomal subunit. Forms a cluster with proteins L3 and L19. In the 70S ribosome, L14 and L19 interact and together make contacts with the 16S rRNA in bridges B5 and B8.

In terms of biological role, binds to 23S rRNA. Forms part of two intersubunit bridges in the 70S ribosome. The protein is Large ribosomal subunit protein uL14 of Parasynechococcus marenigrum (strain WH8102).